The chain runs to 285 residues: Type II restriction enzyme Cfr10I (285 aa).

Mg(2+) is bound by residues Asp134 and Glu204.

In terms of assembly, homodimer. The cofactor is Mg(2+).

The enzyme catalyses Endonucleolytic cleavage of DNA to give specific double-stranded fragments with terminal 5'-phosphates.. Its function is as follows. An F and P subtype restriction enzyme that recognizes the double-stranded sequence 5'-RCCGGY-3' and cleaves after R-1. This chain is Type II restriction enzyme Cfr10I (cfr10IR), found in Citrobacter freundii.